The sequence spans 346 residues: N-acetyl-gamma-glutamyl-phosphate reductase (346 aa).

Cys149 is an active-site residue.

This sequence belongs to the NAGSA dehydrogenase family. Type 1 subfamily.

It localises to the cytoplasm. The enzyme catalyses N-acetyl-L-glutamate 5-semialdehyde + phosphate + NADP(+) = N-acetyl-L-glutamyl 5-phosphate + NADPH + H(+). It participates in amino-acid biosynthesis; L-arginine biosynthesis; N(2)-acetyl-L-ornithine from L-glutamate: step 3/4. Its function is as follows. Catalyzes the NADPH-dependent reduction of N-acetyl-5-glutamyl phosphate to yield N-acetyl-L-glutamate 5-semialdehyde. The chain is N-acetyl-gamma-glutamyl-phosphate reductase from Oceanobacillus iheyensis (strain DSM 14371 / CIP 107618 / JCM 11309 / KCTC 3954 / HTE831).